A 609-amino-acid chain; its full sequence is Replication protein A 70 kDa DNA-binding subunit (609 aa).

Residues 112–164 form a disordered region; sequence IGNPHPYNDGQGPPQPAAPAPASAPPPSKPQNISAPPPPSMNRGASKLFGGGS. Over residues 124–151 the composition is skewed to pro residues; it reads PPQPAAPAPASAPPPSKPQNISAPPPPS. Residues 189–273 constitute a DNA-binding region (OB); sequence WTVRARVTNK…VKNDYEMTFN (85 aa). The segment at 472–494 adopts a C4-type zinc-finger fold; it reads CPSQDCNKKVIDQQNGLFRCEKC.

The protein belongs to the replication factor A protein 1 family. As to quaternary structure, component of the heterotrimeric canonical replication protein A complex (RPA). Interacts with rpain-a.

It is found in the nucleus. The protein localises to the PML body. As part of the heterotrimeric replication protein A complex (RPA/RP-A), binds and stabilizes single-stranded DNA intermediates, that form during DNA replication or upon DNA stress. It prevents their reannealing and in parallel, recruits and activates different proteins and complexes involved in DNA metabolism. Thereby, it plays an essential role both in DNA replication and the cellular response to DNA damage. This chain is Replication protein A 70 kDa DNA-binding subunit (rpa1), found in Xenopus tropicalis (Western clawed frog).